We begin with the raw amino-acid sequence, 73 residues long: Small ribosomal subunit protein uS15c (73 aa).

The protein belongs to the universal ribosomal protein uS15 family. Part of the 30S ribosomal subunit.

It localises to the plastid. It is found in the chloroplast. This chain is Small ribosomal subunit protein uS15c (rps15), found in Welwitschia mirabilis (Tree tumbo).